A 251-amino-acid chain; its full sequence is Uridylate kinase (251 aa).

19-22 (KLSG) is an ATP binding site. Gly61 contacts UMP. The ATP site is built by Gly62 and Arg66. Residues Asp81 and 142-149 (IGNPFFTT) contribute to the UMP site. Residues Thr169, Gln170, Tyr175, and Asp178 each coordinate ATP.

This sequence belongs to the UMP kinase family. Homohexamer.

The protein resides in the cytoplasm. It carries out the reaction UMP + ATP = UDP + ADP. It participates in pyrimidine metabolism; CTP biosynthesis via de novo pathway; UDP from UMP (UMPK route): step 1/1. With respect to regulation, inhibited by UTP. Its function is as follows. Catalyzes the reversible phosphorylation of UMP to UDP. This chain is Uridylate kinase, found in Hyphomonas neptunium (strain ATCC 15444).